Consider the following 88-residue polypeptide: Small ribosomal subunit protein bS20 (88 aa).

The protein belongs to the bacterial ribosomal protein bS20 family.

In terms of biological role, binds directly to 16S ribosomal RNA. This Rhodospirillum rubrum (strain ATCC 11170 / ATH 1.1.1 / DSM 467 / LMG 4362 / NCIMB 8255 / S1) protein is Small ribosomal subunit protein bS20.